A 398-amino-acid chain; its full sequence is MDSNFHYSIDLNEDQNHHEQPFFYPLGSSSSLHHHHHHHHHQVPSNSSSSSSSISSLSSYLPFLINSQEDQHVAYNNTYHADHLHLSQPLKAKMFVANGGSSACDHMVPKKETRLKLTIRKKDHEDQPHPLHQNPTKPDSDSDKWLMSPKMRLIKKTITNNKQLIDQTNNNNHKESDHYPLNHKTNFDEDHHEDLNFKNVLTRKTTAATTENRYNTINENGYSNNNGVIRVCSDCNTTKTPLWRSGPRGPKSLCNACGIRQRKARRAAMAAAAAAGDQEVAVAPRVQQLPLKKKLQNKKKRSNGGEKYNHSPPMVAKAKKCKIKEEEEKEMEAETVAGDSEISKSTTSSNSSISSNKFCFDDLTIMLSKSSAYQQVFPQDEKEAAVLLMALSYGMVHG.

Positions 20-51 (QPFFYPLGSSSSLHHHHHHHHHQVPSNSSSSS) are disordered. The span at 32 to 42 (LHHHHHHHHHQ) shows a compositional bias: basic residues. Residues 109–116 (PKKETRLK) carry the Nuclear localization signal motif. The interval 122 to 144 (KDHEDQPHPLHQNPTKPDSDSDK) is disordered. Residues 226 to 280 (NGVIRVCSDCNTTKTPLWRSGPRGPKSLCNACGIRQRKARRAAMAAAAAAGDQEV) form a GATA-type zinc finger. The tract at residues 289 to 353 (LPLKKKLQNK…KSTTSSNSSI (65 aa)) is disordered. Over residues 291-302 (LKKKLQNKKKRS) the composition is skewed to basic residues. Over residues 343–353 (SKSTTSSNSSI) the composition is skewed to low complexity.

It belongs to the type IV zinc-finger family. Class B subfamily. Interacts with SNL1. Forms heterodimers with GATA18. In terms of tissue distribution, expressed predominantly in leaves, and barely in stems, flowers and siliques.

The protein resides in the nucleus. Transcriptional regulator that specifically binds 5'-GATA-3' or 5'-GAT-3' motifs within gene promoters. Involved in the modulation of chloroplast development, growth and division in a cytokinin-dependent manner. Repressor of the gibberellic acid (GA) signaling pathway that represses flowering and modulates greening, in a SOC1-dependent manner. Prevents the accumulation of SOC1 during flowering. Promotes chlorophyll biosynthesis throughout the plant, by regulating chlorophyll biosynthetic genes (e.g. HEMA1 and GUN4) and chloroplast localized glutamate synthase (e.g. GLU1). Involved in the regulation of sugar-sensing genes (e.g. HXK1, HXK2, STP13 and PLT6). Regulator of germination, senescence, elongation growth and flowering time. Also influences leaf starch content. This Arabidopsis thaliana (Mouse-ear cress) protein is GATA transcription factor 21.